Reading from the N-terminus, the 302-residue chain is Glutaminase (302 aa).

The substrate site is built by serine 61, asparagine 111, glutamate 155, asparagine 162, tyrosine 186, tyrosine 238, and valine 256.

Belongs to the glutaminase family. In terms of assembly, homotetramer.

It carries out the reaction L-glutamine + H2O = L-glutamate + NH4(+). This is Glutaminase from Pseudomonas fluorescens (strain ATCC BAA-477 / NRRL B-23932 / Pf-5).